A 239-amino-acid chain; its full sequence is MKNDVISPEFDENGRPLRRIRSFVRRQGRLTKGQEHALENYWPVMGVEFSEAPVDFATLFGREAPVTLEIGFGMGASLVAMAKARPEQNFLGIEVHSPGVGACLASAHEEGVENLRVMCHDAVEVLHKMIPDNSLSMVQLFFPDPWHKARHNKRRIVQVPFAELVLSKLKLGGVFHMATDWEAYAEHMLEVMSSIDGYKNLSESNDYVPRPESRPVTKFEQRGHRLGHGVWDLMFERVK.

S-adenosyl-L-methionine contacts are provided by Glu-69, Glu-94, Asp-121, and Asp-144. The active site involves Asp-144. Residue Lys-148 coordinates substrate. The tract at residues 150-155 is interaction with RNA; sequence RHNKRR. Residues Asp-180 and 217 to 220 each bind substrate; that span reads TKFE.

It belongs to the class I-like SAM-binding methyltransferase superfamily. TrmB family. Monomer.

It carries out the reaction guanosine(46) in tRNA + S-adenosyl-L-methionine = N(7)-methylguanosine(46) in tRNA + S-adenosyl-L-homocysteine. It functions in the pathway tRNA modification; N(7)-methylguanine-tRNA biosynthesis. In terms of biological role, catalyzes the formation of N(7)-methylguanine at position 46 (m7G46) in tRNA. In Salmonella choleraesuis (strain SC-B67), this protein is tRNA (guanine-N(7)-)-methyltransferase.